Reading from the N-terminus, the 339-residue chain is Glycerol-3-phosphate dehydrogenase [NAD(P)+] (339 aa).

NADPH contacts are provided by Ser-15, Trp-16, His-36, and Lys-110. 3 residues coordinate sn-glycerol 3-phosphate: Lys-110, Gly-144, and Ser-146. Ala-148 contacts NADPH. The sn-glycerol 3-phosphate site is built by Lys-199, Asp-252, Ser-262, Arg-263, and Asn-264. The Proton acceptor role is filled by Lys-199. Arg-263 provides a ligand contact to NADPH. Residues Val-287 and Glu-289 each coordinate NADPH.

The protein belongs to the NAD-dependent glycerol-3-phosphate dehydrogenase family.

Its subcellular location is the cytoplasm. It catalyses the reaction sn-glycerol 3-phosphate + NAD(+) = dihydroxyacetone phosphate + NADH + H(+). The enzyme catalyses sn-glycerol 3-phosphate + NADP(+) = dihydroxyacetone phosphate + NADPH + H(+). Its pathway is membrane lipid metabolism; glycerophospholipid metabolism. In terms of biological role, catalyzes the reduction of the glycolytic intermediate dihydroxyacetone phosphate (DHAP) to sn-glycerol 3-phosphate (G3P), the key precursor for phospholipid synthesis. This Desulfotalea psychrophila (strain LSv54 / DSM 12343) protein is Glycerol-3-phosphate dehydrogenase [NAD(P)+].